The chain runs to 373 residues: Protein SENSITIVE TO PROTON RHIZOTOXICITY 2 (373 aa).

2 C2H2-type zinc fingers span residues 217-239 (HYCQ…MRAH) and 327-362 (KHCG…VPAH).

In terms of tissue distribution, expressed at low levels in roots (e.g. root tips and lateral roots), leaves (e.g. at the edge of mature leaves, possibly in hydathodes, and in vascular bundles), flowers (e.g. floral filaments), stems, siliques and cotyledons.

The protein resides in the nucleus. In terms of biological role, probable transcription factor. Together with STOP1, plays a critical role in tolerance to major stress factors in acid soils such as proton H(+) and aluminum ion Al(3+). Required for the expression of genes in response to acidic stress (e.g. ALMT1 and MATE), and Al-activated citrate exudation. The chain is Protein SENSITIVE TO PROTON RHIZOTOXICITY 2 from Arabidopsis thaliana (Mouse-ear cress).